Reading from the N-terminus, the 55-residue chain is Conotoxin Cal22b (55 aa).

Positions G1 to A5 are excised as a propeptide.

Contains 4 disulfide bonds. As to expression, expressed by the venom duct.

It localises to the secreted. Probable neurotoxin with unknown target. Possibly targets ion channels. In Californiconus californicus (California cone), this protein is Conotoxin Cal22b.